The following is an 878-amino-acid chain: Splicing factor 3B subunit 2 (878 aa).

Positions 1-10 (MAAEHPEPPK) are enriched in basic and acidic residues. 2 disordered regions span residues 1 to 25 (MAAE…GHYG) and 67 to 136 (RPVL…LRVG). Residue lysine 10 forms a Glycyl lysine isopeptide (Lys-Gly) (interchain with G-Cter in SUMO2) linkage. The region spanning 24-58 (YGAWAAQELQARLAEIGAPIQGSREELVERLQTYT) is the SAP domain. Composition is skewed to pro residues over residues 91–114 (PMPP…PPPG) and 122–133 (AHPPNLGPPPPL). Positions 140 to 177 (ALSEEERLKLAQQQAALLMQQEERAKQAAVLMEQERQQ) form a coiled coil. Disordered regions lie at residues 183–356 (GTAV…EYVT) and 383–436 (KKEK…SKKK). The segment covering 201–221 (PLGPRVAAPVGPVVPTPTVLP) has biased composition (low complexity). Arginine 205, arginine 228, and arginine 230 each carry omega-N-methylarginine. The segment covering 224 to 237 (APVPRPRGPPPPPG) has biased composition (pro residues). Lysine 258 bears the N6-acetyllysine mark. Residues 260–269 (LQLKESRQEE) show a composition bias toward basic and acidic residues. A Glycyl lysine isopeptide (Lys-Gly) (interchain with G-Cter in SUMO2) cross-link involves residue lysine 263. Serine 272 is modified (phosphoserine). Residue threonine 281 is modified to Phosphothreonine. 2 positions are modified to phosphoserine: serine 290 and serine 292. Threonine 294 carries the phosphothreonine modification. Residue serine 300 is modified to Phosphoserine. Basic residues predominate over residues 305 to 321 (EKNRKRRNRKKKKKPQR). Residues 330 to 342 (SGDREKDSGRSRG) are compositionally biased toward basic and acidic residues. A Phosphoserine modification is found at serine 343. Residues lysine 383 and lysine 395 each participate in a glycyl lysine isopeptide (Lys-Gly) (interchain with G-Cter in SUMO2) cross-link. 2 stretches are compositionally biased toward basic and acidic residues: residues 383–397 (KKEK…DKME) and 405–414 (KGFEEEHKDS). The tract at residues 384-533 (KEKEKEPEKL…QEKEEQKTMK (150 aa)) is required for interaction with PRMT9. Phosphoserine is present on residues serine 414, serine 418, and serine 419. A Glycyl lysine isopeptide (Lys-Gly) (interchain with G-Cter in SUMO2) cross-link involves residue lysine 475. Residues arginine 491 and arginine 498 each carry the omega-N-methylarginine modification. At arginine 491 the chain carries Symmetric dimethylarginine. A Glycyl lysine isopeptide (Lys-Gly) (interchain with G-Cter in SUMO2) cross-link involves residue lysine 526. The segment at 674-740 (AAEFQTKTEE…PGGFSSVPAG (67 aa)) is disordered. Acidic residues predominate over residues 695–715 (EPSDEESSEEEEEEESDEDKP). Lysine 753 participates in a covalent cross-link: Glycyl lysine isopeptide (Lys-Gly) (interchain with G-Cter in SUMO2). A Phosphothreonine modification is found at threonine 763. Glycyl lysine isopeptide (Lys-Gly) (interchain with G-Cter in SUMO2) cross-links involve residues lysine 773, lysine 826, and lysine 840. Residues 827–852 (YEEHVREQQAQVEKEDFSDMVAEHAA) are compositionally biased toward basic and acidic residues. A disordered region spans residues 827–878 (YEEHVREQQAQVEKEDFSDMVAEHAAKQKQKKRKAQPQDSRGGSKKYKEFKF). Serine 844 is modified (phosphoserine).

In terms of assembly, component of the 17S U2 SnRNP complex, a ribonucleoprotein complex that contains small nuclear RNA (snRNA) U2 and a number of specific proteins. Part of the SF3B subcomplex of the 17S U2 SnRNP complex. SF3B associates with the splicing subcomplex SF3A and a 12S RNA unit to form the U2 small nuclear ribonucleoproteins complex (U2 snRNP). Within the SF3B complex, interacts directly with SF3B4. Found in a complex with PRMT9, SF3B2 and SF3B4. Interacts (Arg-491-methylated form) with SMN1 (via Tudor domain). Interacts with RBM7. Interacts with ERCC6. Component of the minor spliceosome. Within this complex, interacts with SCNM1 and CRIPT. Post-translationally, methylation at Arg-491 by PRMT9 is required for the interaction with SMN1.

The protein resides in the nucleus. It localises to the nucleus speckle. In terms of biological role, component of the 17S U2 SnRNP complex of the spliceosome, a large ribonucleoprotein complex that removes introns from transcribed pre-mRNAs. The 17S U2 SnRNP complex (1) directly participates in early spliceosome assembly and (2) mediates recognition of the intron branch site during pre-mRNA splicing by promoting the selection of the pre-mRNA branch-site adenosine, the nucleophile for the first step of splicing. Within the 17S U2 SnRNP complex, SF3B2 is part of the SF3B subcomplex, which is required for 'A' complex assembly formed by the stable binding of U2 snRNP to the branchpoint sequence in pre-mRNA. Sequence independent binding of SF3A and SF3B subcomplexes upstream of the branch site is essential, it may anchor U2 snRNP to the pre-mRNA. May also be involved in the assembly of the 'E' complex. Also acts as a component of the minor spliceosome, which is involved in the splicing of U12-type introns in pre-mRNAs. The chain is Splicing factor 3B subunit 2 from Mus musculus (Mouse).